We begin with the raw amino-acid sequence, 126 residues long: Histone H2B type 1-B (126 aa).

Over residues 1-12 (MPEPSKSAPAPK) the composition is skewed to low complexity. The segment at 1–35 (MPEPSKSAPAPKKGSKKAITKAQKKDGKKRKRSRK) is disordered. An N-acetylproline modification is found at P2. Position 3 is an ADP-ribosyl glutamic acid (E3). K6 carries the N6-(2-hydroxyisobutyryl)lysine; alternate modification. K6 is modified (N6-(beta-hydroxybutyryl)lysine; alternate). Position 6 is an N6-acetyllysine; alternate (K6). K6 is subject to N6-butyryllysine; alternate. The residue at position 6 (K6) is an N6-crotonyllysine; alternate. At K6 the chain carries N6-lactoyllysine; alternate. A Glycyl lysine isopeptide (Lys-Gly) (interchain with G-Cter in SUMO2); alternate cross-link involves residue K6. S7 carries the post-translational modification ADP-ribosylserine. The residue at position 12 (K12) is an N6-(beta-hydroxybutyryl)lysine; alternate. An N6-acetyllysine; alternate mark is found at K12 and K13. Residues K12 and K13 each carry the N6-crotonyllysine; alternate modification. K12 carries the N6-lactoyllysine; alternate modification. N6-(2-hydroxyisobutyryl)lysine; alternate is present on K13. S15 carries the post-translational modification Phosphoserine; by STK4/MST1. K16, K17, K21, and K24 each carry N6-acetyllysine; alternate. Residues K16, K17, K21, and K24 each carry the N6-crotonyllysine; alternate modification. 4 positions are modified to N6-lactoyllysine; alternate: K16, K17, K21, and K24. An N6-(beta-hydroxybutyryl)lysine; alternate mark is found at K17 and K21. K17 is modified (N6-glutaryllysine; alternate). Residues K21 and K24 each carry the N6-(2-hydroxyisobutyryl)lysine; alternate modification. K21 bears the N6-butyryllysine; alternate mark. K21 participates in a covalent cross-link: Glycyl lysine isopeptide (Lys-Gly) (interchain with G-Cter in SUMO2); alternate. Residue K25 is modified to N6-(2-hydroxyisobutyryl)lysine. K35 carries the post-translational modification N6-(2-hydroxyisobutyryl)lysine; alternate. N6-(beta-hydroxybutyryl)lysine; alternate is present on K35. Residue K35 is modified to N6-crotonyllysine; alternate. Residue K35 is modified to N6-glutaryllysine; alternate. K35 is modified (N6-succinyllysine; alternate). A Glycyl lysine isopeptide (Lys-Gly) (interchain with G-Cter in ubiquitin); alternate cross-link involves residue K35. Position 36 is a polyADP-ribosyl glutamic acid (E36). A Phosphoserine; by AMPK modification is found at S37. N6-(2-hydroxyisobutyryl)lysine; alternate occurs at positions 44, 47, and 58. N6-lactoyllysine; alternate is present on K44. N6-glutaryllysine; alternate occurs at positions 44 and 47. Position 47 is an N6-methyllysine; alternate (K47). Position 58 is an N6,N6-dimethyllysine; alternate (K58). The residue at position 80 (R80) is a Dimethylated arginine. K86 is modified (N6-(2-hydroxyisobutyryl)lysine; alternate). Position 86 is an N6-(beta-hydroxybutyryl)lysine; alternate (K86). K86 carries the N6-acetyllysine; alternate modification. K86 bears the N6-lactoyllysine; alternate mark. K86 bears the N6,N6,N6-trimethyllysine; alternate mark. 2 positions are modified to omega-N-methylarginine: R87 and R93. Position 109 is an N6-(2-hydroxyisobutyryl)lysine; alternate (K109). The residue at position 109 (K109) is an N6-lactoyllysine; alternate. N6-glutaryllysine; alternate is present on K109. At K109 the chain carries N6-methyllysine; alternate. Residue S113 is glycosylated (O-linked (GlcNAc) serine). T116 carries the phosphothreonine modification. Residues K117 and K121 each carry the N6-(2-hydroxyisobutyryl)lysine; alternate modification. Residues K117 and K121 each carry the N6-(beta-hydroxybutyryl)lysine; alternate modification. N6-lactoyllysine; alternate occurs at positions 117 and 121. N6-glutaryllysine; alternate occurs at positions 117 and 121. K117 and K121 each carry N6-succinyllysine; alternate. K117 carries the post-translational modification N6-malonyllysine; alternate. K117 bears the N6-methylated lysine; alternate mark. K121 participates in a covalent cross-link: Glycyl lysine isopeptide (Lys-Gly) (interchain with G-Cter in ubiquitin); alternate.

This sequence belongs to the histone H2B family. In terms of assembly, the nucleosome is a histone octamer containing two molecules each of H2A, H2B, H3 and H4 assembled in one H3-H4 heterotetramer and two H2A-H2B heterodimers. The octamer wraps approximately 147 bp of DNA. In terms of processing, monoubiquitination at Lys-35 (H2BK34Ub) by the MSL1/MSL2 dimer is required for histone H3 'Lys-4' (H3K4me) and 'Lys-79' (H3K79me) methylation and transcription activation at specific gene loci, such as HOXA9 and MEIS1 loci. Similarly, monoubiquitination at Lys-121 (H2BK120Ub) by the RNF20/40 complex gives a specific tag for epigenetic transcriptional activation and is also prerequisite for histone H3 'Lys-4' and 'Lys-79' methylation. It also functions cooperatively with the FACT dimer to stimulate elongation by RNA polymerase II. H2BK120Ub also acts as a regulator of mRNA splicing: deubiquitination by USP49 is required for efficient cotranscriptional splicing of a large set of exons. Phosphorylation at Ser-37 (H2BS36ph) by AMPK in response to stress promotes transcription. Phosphorylated on Ser-15 (H2BS14ph) by STK4/MST1 during apoptosis; which facilitates apoptotic chromatin condensation. Also phosphorylated on Ser-15 in response to DNA double strand breaks (DSBs), and in correlation with somatic hypermutation and immunoglobulin class-switch recombination. Post-translationally, glcNAcylation at Ser-113 promotes monoubiquitination of Lys-121. It fluctuates in response to extracellular glucose, and associates with transcribed genes. In terms of processing, ADP-ribosylated by PARP1 or PARP2 on Ser-7 (H2BS6ADPr) in response to DNA damage. H2BS6ADPr promotes recruitment of CHD1L. Mono-ADP-ribosylated on Glu-3 (H2BE2ADPr) by PARP3 in response to single-strand breaks. Poly ADP-ribosylation on Glu-36 (H2BE35ADPr) by PARP1 regulates adipogenesis: it inhibits phosphorylation at Ser-37 (H2BS36ph), thereby blocking expression of pro-adipogenetic genes. Crotonylation (Kcr) is specifically present in male germ cells and marks testis-specific genes in post-meiotic cells, including X-linked genes that escape sex chromosome inactivation in haploid cells. Crotonylation marks active promoters and enhancers and confers resistance to transcriptional repressors. It is also associated with post-meiotically activated genes on autosomes. Post-translationally, lactylated in macrophages by EP300/P300 by using lactoyl-CoA directly derived from endogenous or exogenous lactate, leading to stimulates gene transcription.

Its subcellular location is the nucleus. It localises to the chromosome. Functionally, core component of nucleosome. Nucleosomes wrap and compact DNA into chromatin, limiting DNA accessibility to the cellular machineries which require DNA as a template. Histones thereby play a central role in transcription regulation, DNA repair, DNA replication and chromosomal stability. DNA accessibility is regulated via a complex set of post-translational modifications of histones, also called histone code, and nucleosome remodeling. The sequence is that of Histone H2B type 1-B from Homo sapiens (Human).